A 485-amino-acid chain; its full sequence is Glutamyl-tRNA(Gln) amidotransferase subunit A (485 aa).

Active-site charge relay system residues include Lys-79 and Ser-154. Catalysis depends on Ser-178, which acts as the Acyl-ester intermediate.

Belongs to the amidase family. GatA subfamily. As to quaternary structure, heterotrimer of A, B and C subunits.

The catalysed reaction is L-glutamyl-tRNA(Gln) + L-glutamine + ATP + H2O = L-glutaminyl-tRNA(Gln) + L-glutamate + ADP + phosphate + H(+). Its function is as follows. Allows the formation of correctly charged Gln-tRNA(Gln) through the transamidation of misacylated Glu-tRNA(Gln) in organisms which lack glutaminyl-tRNA synthetase. The reaction takes place in the presence of glutamine and ATP through an activated gamma-phospho-Glu-tRNA(Gln). This chain is Glutamyl-tRNA(Gln) amidotransferase subunit A, found in Clostridium botulinum (strain ATCC 19397 / Type A).